A 332-amino-acid polypeptide reads, in one-letter code: Holliday junction branch migration complex subunit RuvB (332 aa).

Residues 1 to 182 (MNKNFIESNL…FAFTCRLEYY (182 aa)) are large ATPase domain (RuvB-L). Residues L21, R22, G63, K66, T67, T68, 129 to 131 (EDF), R172, Y182, and R219 each bind ATP. Residue T67 coordinates Mg(2+). Residues 183–253 (DPMILQKILL…VANRALTMLS (71 aa)) are small ATPAse domain (RuvB-S). Residues 256–332 (EKGLDEMDKK…YQHIVGSSQR (77 aa)) are head domain (RuvB-H). R311 and R316 together coordinate DNA.

This sequence belongs to the RuvB family. Homohexamer. Forms an RuvA(8)-RuvB(12)-Holliday junction (HJ) complex. HJ DNA is sandwiched between 2 RuvA tetramers; dsDNA enters through RuvA and exits via RuvB. An RuvB hexamer assembles on each DNA strand where it exits the tetramer. Each RuvB hexamer is contacted by two RuvA subunits (via domain III) on 2 adjacent RuvB subunits; this complex drives branch migration. In the full resolvosome a probable DNA-RuvA(4)-RuvB(12)-RuvC(2) complex forms which resolves the HJ.

Its subcellular location is the cytoplasm. It catalyses the reaction ATP + H2O = ADP + phosphate + H(+). In terms of biological role, the RuvA-RuvB-RuvC complex processes Holliday junction (HJ) DNA during genetic recombination and DNA repair, while the RuvA-RuvB complex plays an important role in the rescue of blocked DNA replication forks via replication fork reversal (RFR). RuvA specifically binds to HJ cruciform DNA, conferring on it an open structure. The RuvB hexamer acts as an ATP-dependent pump, pulling dsDNA into and through the RuvAB complex. RuvB forms 2 homohexamers on either side of HJ DNA bound by 1 or 2 RuvA tetramers; 4 subunits per hexamer contact DNA at a time. Coordinated motions by a converter formed by DNA-disengaged RuvB subunits stimulates ATP hydrolysis and nucleotide exchange. Immobilization of the converter enables RuvB to convert the ATP-contained energy into a lever motion, pulling 2 nucleotides of DNA out of the RuvA tetramer per ATP hydrolyzed, thus driving DNA branch migration. The RuvB motors rotate together with the DNA substrate, which together with the progressing nucleotide cycle form the mechanistic basis for DNA recombination by continuous HJ branch migration. Branch migration allows RuvC to scan DNA until it finds its consensus sequence, where it cleaves and resolves cruciform DNA. This Protochlamydia amoebophila (strain UWE25) protein is Holliday junction branch migration complex subunit RuvB.